The primary structure comprises 155 residues: Ribosome maturation factor RimP (155 aa).

This sequence belongs to the RimP family.

It localises to the cytoplasm. Required for maturation of 30S ribosomal subunits. In Gloeothece citriformis (strain PCC 7424) (Cyanothece sp. (strain PCC 7424)), this protein is Ribosome maturation factor RimP.